The sequence spans 130 residues: Small ribosomal subunit protein uS11 (130 aa).

This sequence belongs to the universal ribosomal protein uS11 family. As to quaternary structure, part of the 30S ribosomal subunit.

Its function is as follows. Located on the platform of the 30S subunit. This Nanoarchaeum equitans (strain Kin4-M) protein is Small ribosomal subunit protein uS11.